Here is a 179-residue protein sequence, read N- to C-terminus: Acireductone dioxygenase (179 aa).

His85, His87, Glu91, and His132 together coordinate Fe(2+). Residues His85, His87, Glu91, and His132 each contribute to the Ni(2+) site.

The protein belongs to the acireductone dioxygenase (ARD) family. Fe(2+) is required as a cofactor. The cofactor is Ni(2+).

The protein localises to the cytoplasm. Its subcellular location is the nucleus. The enzyme catalyses 1,2-dihydroxy-5-(methylsulfanyl)pent-1-en-3-one + O2 = 4-methylsulfanyl-2-oxobutanoate + formate + 2 H(+). The catalysed reaction is 1,2-dihydroxy-5-(methylsulfanyl)pent-1-en-3-one + O2 = 3-(methylsulfanyl)propanoate + CO + formate + 2 H(+). It functions in the pathway amino-acid biosynthesis; L-methionine biosynthesis via salvage pathway; L-methionine from S-methyl-5-thio-alpha-D-ribose 1-phosphate: step 5/6. Functionally, catalyzes 2 different reactions between oxygen and the acireductone 1,2-dihydroxy-3-keto-5-methylthiopentene (DHK-MTPene) depending upon the metal bound in the active site. Fe-containing acireductone dioxygenase (Fe-ARD) produces formate and 2-keto-4-methylthiobutyrate (KMTB), the alpha-ketoacid precursor of methionine in the methionine recycle pathway. Ni-containing acireductone dioxygenase (Ni-ARD) produces methylthiopropionate, carbon monoxide and formate, and does not lie on the methionine recycle pathway. This is Acireductone dioxygenase from Saccharomyces cerevisiae (strain ATCC 204508 / S288c) (Baker's yeast).